The following is a 365-amino-acid chain: Sesquiterpene synthase 3 (365 aa).

Residues aspartate 117, asparagine 253, serine 257, and glutamate 261 each contribute to the Mg(2+) site. The DDXXD motif signature appears at 117–121 (DDWSD). Positions 253-261 (NDILSYNRE) match the NSE/DTE motif motif. Residues arginine 341 and tyrosine 342 each coordinate (2E,6E)-farnesyl diphosphate.

Belongs to the terpene synthase family. It depends on Mg(2+) as a cofactor.

The enzyme catalyses (2E,6E)-farnesyl diphosphate = delta-cadinene + diphosphate. Its function is as follows. Terpene cyclase that catalyzes the cyclization of farnesyl diphosphate (FPP) to various sesquiterpenes, including beta-elemene gamma-cadinene, delta-cadinene, and alpha-cadinene. This chain is Sesquiterpene synthase 3, found in Postia placenta (strain ATCC 44394 / Madison 698-R) (Brown rot fungus).